A 220-amino-acid polypeptide reads, in one-letter code: Putative tyrosine-protein phosphatase 1 (220 aa).

Residues F67–Q218 enclose the Tyrosine-protein phosphatase domain.

Belongs to the protein-tyrosine phosphatase family. Non-receptor class CDC14 subfamily.

The enzyme catalyses O-phospho-L-tyrosyl-[protein] + H2O = L-tyrosyl-[protein] + phosphate. Could be inactive as the active site cysteine is modified to tryptophan. The protein is Putative tyrosine-protein phosphatase 1 (PTP-1) of Orgyia pseudotsugata multicapsid polyhedrosis virus (OpMNPV).